A 723-amino-acid polypeptide reads, in one-letter code: Threonine--tRNA ligase 1, cytoplasmic (723 aa).

Polar residues predominate over residues 1 to 10 (MSEEQASSPS). The tract at residues 1–49 (MSEEQASSPSAKMGDEEKPVGAGEEKQKEGSKKKNKEGSGDGGRAELNP) is disordered. A compositionally biased stretch (basic and acidic residues) spans 13–39 (MGDEEKPVGAGEEKQKEGSKKKNKEGS). Position 39 is a phosphoserine (Ser-39). Positions 79–143 (DSKPIKVTLP…EEDCTLELLK (65 aa)) constitute a TGS domain. Lys-243 is modified (N6-acetyllysine). The residue at position 246 (Thr-246) is a Phosphothreonine. At Tyr-298 the chain carries Phosphotyrosine. A Phosphothreonine modification is found at Thr-453. Ser-702 carries the post-translational modification Phosphoserine.

It belongs to the class-II aminoacyl-tRNA synthetase family. In terms of assembly, homodimer. Post-translationally, ISGylated.

It is found in the cytoplasm. It catalyses the reaction tRNA(Thr) + L-threonine + ATP = L-threonyl-tRNA(Thr) + AMP + diphosphate + H(+). Its function is as follows. Catalyzes the attachment of threonine to tRNA(Thr) in a two-step reaction: threonine is first activated by ATP to form Thr-AMP and then transferred to the acceptor end of tRNA(Thr). Also edits incorrectly charged tRNA(Thr) via its editing domain, at the post-transfer stage. In Bos taurus (Bovine), this protein is Threonine--tRNA ligase 1, cytoplasmic (TARS1).